Reading from the N-terminus, the 622-residue chain is Chaperone protein HscA homolog (622 aa).

This sequence belongs to the heat shock protein 70 family.

Functionally, chaperone involved in the maturation of iron-sulfur cluster-containing proteins. Has a low intrinsic ATPase activity which is markedly stimulated by HscB. This Burkholderia multivorans (strain ATCC 17616 / 249) protein is Chaperone protein HscA homolog.